Here is a 341-residue protein sequence, read N- to C-terminus: L-threonine 3-dehydrogenase (341 aa).

Zn(2+) is bound at residue Cys38. Catalysis depends on charge relay system residues Thr40 and His43. His63, Glu64, Cys93, Cys96, Cys99, and Cys107 together coordinate Zn(2+). NAD(+) contacts are provided by residues Ile175, Asp195, Arg200, 262–264, and 286–287; these read LGI and IY.

Belongs to the zinc-containing alcohol dehydrogenase family. Homotetramer. The cofactor is Zn(2+).

The protein localises to the cytoplasm. The catalysed reaction is L-threonine + NAD(+) = (2S)-2-amino-3-oxobutanoate + NADH + H(+). The protein operates within amino-acid degradation; L-threonine degradation via oxydo-reductase pathway; glycine from L-threonine: step 1/2. In terms of biological role, catalyzes the NAD(+)-dependent oxidation of L-threonine to 2-amino-3-ketobutyrate. In Escherichia coli O127:H6 (strain E2348/69 / EPEC), this protein is L-threonine 3-dehydrogenase.